The chain runs to 62 residues: Large ribosomal subunit protein uL29 (62 aa).

This sequence belongs to the universal ribosomal protein uL29 family.

This chain is Large ribosomal subunit protein uL29, found in Geobacter sp. (strain M21).